The chain runs to 189 residues: Protein GrpE (189 aa).

The tract at residues 1–37 (MSDSSKEKKKKFADMVSRQKGDDQQSDNHKQTDDLNE) is disordered. The span at 17 to 33 (SRQKGDDQQSDNHKQTD) shows a compositional bias: basic and acidic residues.

It belongs to the GrpE family. In terms of assembly, homodimer.

It localises to the cytoplasm. Functionally, participates actively in the response to hyperosmotic and heat shock by preventing the aggregation of stress-denatured proteins, in association with DnaK and GrpE. It is the nucleotide exchange factor for DnaK and may function as a thermosensor. Unfolded proteins bind initially to DnaJ; upon interaction with the DnaJ-bound protein, DnaK hydrolyzes its bound ATP, resulting in the formation of a stable complex. GrpE releases ADP from DnaK; ATP binding to DnaK triggers the release of the substrate protein, thus completing the reaction cycle. Several rounds of ATP-dependent interactions between DnaJ, DnaK and GrpE are required for fully efficient folding. In Wolbachia pipientis wMel, this protein is Protein GrpE.